We begin with the raw amino-acid sequence, 225 residues long: NAD(P)H-quinone oxidoreductase subunit K, chloroplastic (225 aa).

4 residues coordinate [4Fe-4S] cluster: cysteine 43, cysteine 44, cysteine 108, and cysteine 139.

It belongs to the complex I 20 kDa subunit family. NDH is composed of at least 16 different subunits, 5 of which are encoded in the nucleus. [4Fe-4S] cluster is required as a cofactor.

It is found in the plastid. Its subcellular location is the chloroplast thylakoid membrane. It catalyses the reaction a plastoquinone + NADH + (n+1) H(+)(in) = a plastoquinol + NAD(+) + n H(+)(out). It carries out the reaction a plastoquinone + NADPH + (n+1) H(+)(in) = a plastoquinol + NADP(+) + n H(+)(out). Its function is as follows. NDH shuttles electrons from NAD(P)H:plastoquinone, via FMN and iron-sulfur (Fe-S) centers, to quinones in the photosynthetic chain and possibly in a chloroplast respiratory chain. The immediate electron acceptor for the enzyme in this species is believed to be plastoquinone. Couples the redox reaction to proton translocation, and thus conserves the redox energy in a proton gradient. In Oenothera argillicola (Appalachian evening primrose), this protein is NAD(P)H-quinone oxidoreductase subunit K, chloroplastic.